The following is a 343-amino-acid chain: 5-amino-6-(D-ribitylamino)uracil--L-tyrosine 4-hydroxyphenyl transferase (343 aa).

Residues 39-268 form the Radical SAM core domain; the sequence is VTYVVNRNIN…AIARILLYPE (230 aa). Cys-53, Cys-57, and Cys-60 together coordinate [4Fe-4S] cluster.

This sequence belongs to the radical SAM superfamily. CofH family. Consists of two subunits, CofG and CofH. [4Fe-4S] cluster serves as cofactor.

It carries out the reaction 5-amino-6-(D-ribitylamino)uracil + L-tyrosine + S-adenosyl-L-methionine = 5-amino-5-(4-hydroxybenzyl)-6-(D-ribitylimino)-5,6-dihydrouracil + 2-iminoacetate + 5'-deoxyadenosine + L-methionine + H(+). Its pathway is cofactor biosynthesis; coenzyme F0 biosynthesis. Functionally, catalyzes the radical-mediated synthesis of 5-amino-5-(4-hydroxybenzyl)-6-(D-ribitylimino)-5,6-dihydrouracil from 5-amino-6-(D-ribitylamino)uracil and L-tyrosine. The polypeptide is 5-amino-6-(D-ribitylamino)uracil--L-tyrosine 4-hydroxyphenyl transferase (Archaeoglobus fulgidus (strain ATCC 49558 / DSM 4304 / JCM 9628 / NBRC 100126 / VC-16)).